A 448-amino-acid chain; its full sequence is Ribosome biogenesis protein YTM1 (448 aa).

The ubiquitin-like (UBL) domain stretch occupies residues 5 to 86; sequence TSNQAVVFST…EETLEIEYIE (82 aa). WD repeat units lie at residues 98-136, 191-230, 271-309, 312-351, 357-397, and 403-439; these read PHESWVSAVSCSLPTHFLTTAYDGHLRAFDLSKNVTLDA, LHTAPVSSIAANPSGTQLLTSSWDSLIGVWDTTIPPKHEV, SHIGRVSKVAWLSPTQGVSCGFDSTLRTWDVERGLCTRT, ASEKPFLDLAVNVENQTALTVSTDRTMTLYDLRTEEALSA, LHPA…AAIS, and DGTKKVLAVDWKRGVIGIGGEGGLDVWKVGLENETQG. The tract at residues 225–261 is disordered; sequence PPKHEVPEPTITAADQRTKKRRKVDPSSGDSSSPTAI.

Belongs to the WD repeat WDR12/YTM1 family. In terms of assembly, component of the NOP7 complex, composed of ERB1, NOP7 and YTM1. The complex is held together by ERB1, which interacts with NOP7 via its N-terminal domain and with YTM1 via a high-affinity interaction between the seven-bladed beta-propeller domains of the 2 proteins. The NOP7 complex associates with the 66S pre-ribosome. Interacts (via UBL domain) with MDN1 (via VWFA/MIDAS domain).

It is found in the nucleus. The protein resides in the nucleolus. Its subcellular location is the nucleoplasm. Functionally, component of the NOP7 complex, which is required for maturation of the 25S and 5.8S ribosomal RNAs and formation of the 60S ribosome. The polypeptide is Ribosome biogenesis protein YTM1 (Coprinopsis cinerea (strain Okayama-7 / 130 / ATCC MYA-4618 / FGSC 9003) (Inky cap fungus)).